Reading from the N-terminus, the 74-residue chain is MEKLTILLLVAAVLMSTQALIQEQRQKAKINLFSKRKPSAERWWGENDRRVFGSCTADEECCFNNCVQAYCFFV.

The first 19 residues, 1–19, serve as a signal peptide directing secretion; that stretch reads MEKLTILLLVAAVLMSTQA. A propeptide spanning residues 20 to 41 is cleaved from the precursor; sequence LIQEQRQKAKINLFSKRKPSAE. Intrachain disulfides connect cysteine 55–cysteine 66 and cysteine 61–cysteine 71.

Belongs to the conotoxin O2 superfamily. As to expression, expressed by the venom duct.

It localises to the secreted. Its function is as follows. Inhibits voltage-gated ion channels. This Conus victoriae (Queen Victoria cone) protein is Conotoxin Vc6.11.